The primary structure comprises 125 residues: Small ribosomal subunit protein bS6 (125 aa).

This sequence belongs to the bacterial ribosomal protein bS6 family.

In terms of biological role, binds together with bS18 to 16S ribosomal RNA. The protein is Small ribosomal subunit protein bS6 (rpsF) of Campylobacter jejuni subsp. jejuni serotype O:2 (strain ATCC 700819 / NCTC 11168).